The primary structure comprises 397 residues: G2/mitotic-specific cyclin-B2 (397 aa).

Disordered stretches follow at residues 1 to 20 (MALLRRPTVSSDLKNIDTGV) and 64 to 97 (KVTHVNKQPKPTASVKPVQMETLAPKDPPAPEDV). T8 bears the Phosphothreonine mark. S11 is modified (phosphoserine). Polar residues predominate over residues 64–74 (KVTHVNKQPKP). Phosphoserine is present on residues S77, S98, and S391.

This sequence belongs to the cyclin family. Cyclin AB subfamily. As to quaternary structure, interacts with the CDK1 protein kinase to form a serine/threonine kinase holoenzyme complex also known as maturation promoting factor (MPF). The cyclin subunit imparts substrate specificity to the complex.

In terms of biological role, essential for the control of the cell cycle at the G2/M (mitosis) transition. The polypeptide is G2/mitotic-specific cyclin-B2 (CCNB2) (Mesocricetus auratus (Golden hamster)).